Reading from the N-terminus, the 307-residue chain is MSKKLKAAIIGPGNIGTDLVMKMLRSEWIEPVWMVGIDPESDGLKRARRFGLKTTAEGVDGLLPHVLEDDIRIAFDATSAYVHAENSRKLNEWGVLMVDLTPAAIGRYCVLRVNIKQNVGKLEMNVNMVTCGGQATSPMVAGVSRVQPVGYGKIVAKVFSRSIGPGTRKNIEEFNRTNAGAIEKVGGGKEGNAIIVLNTAHASFMICYTIHFFIKTEPDENPIIPSVHPIIAELQNYFPGYRLKNRPLFYRNPFSIFIEFEPLADYLXNYPGNLDIMTPPALPTLDIFPDKIAIATIQLPCLEPHLP.

The Acyl-thioester intermediate role is filled by Cys131. Residues 162 to 170 (SIGPGTRKN) and Asn273 each bind NAD(+).

This sequence belongs to the acetaldehyde dehydrogenase family.

The enzyme catalyses acetaldehyde + NAD(+) + CoA = acetyl-CoA + NADH + H(+). This is Acetaldehyde dehydrogenase 1 (salG) from Metapseudomonas furukawaii (Pseudomonas furukawaii).